Consider the following 503-residue polypeptide: Transcriptional regulator LovE (503 aa).

Residues 1-14 (MAADQGTFTTSVTL) show a composition bias toward polar residues. Residues 1–21 (MAADQGTFTTSVTLSPVEGSR) form a disordered region. Residues 35–67 (CDRCHAQKIKCTGNKEVTARAPCQRCQQAGLRC) constitute a DNA-binding region (zn(2)-C6 fungal-type). Disordered stretches follow at residues 89–124 (ADPDPCLHMSSPPVPSQSLPLDVSESHSSNTSRQFL) and 331–362 (SHMNPWEGSRSESPSRDDTSSTSGHSSVDTIP). Over residues 339 to 349 (SRSESPSRDDT) the composition is skewed to basic and acidic residues. The span at 350 to 359 (SSTSGHSSVD) shows a compositional bias: polar residues.

It localises to the nucleus. Functionally, transcription factor that regulates the expression of the he gene cluster that mediates the biosynthesis of lovastatin (also known as mevinolin, mevacor or monacolin K), a hypolipidemic inhibitor of (3S)-hydroxymethylglutaryl-coenzyme A (HMG-CoA) reductase (HMGR). This Aspergillus terreus (strain NIH 2624 / FGSC A1156) protein is Transcriptional regulator LovE.